The primary structure comprises 171 residues: GTP-dependent dephospho-CoA kinase (171 aa).

Residues Asp-49, Val-51, Asp-68, and Glu-122 each coordinate GTP.

This sequence belongs to the GTP-dependent DPCK family.

The enzyme catalyses 3'-dephospho-CoA + GTP = GDP + CoA + H(+). It functions in the pathway cofactor biosynthesis; coenzyme A biosynthesis. In terms of biological role, catalyzes the GTP-dependent phosphorylation of the 3'-hydroxyl group of dephosphocoenzyme A to form coenzyme A (CoA). The protein is GTP-dependent dephospho-CoA kinase of Hyperthermus butylicus (strain DSM 5456 / JCM 9403 / PLM1-5).